The sequence spans 201 residues: MLAFILRFIKNKSYFALLAGAWVIIAGLTSQHAWSGNGLPQINGNTLAALAKQYPVVVLFRHAERCDRSDNTCLSDSSGITVNGAQNARSLGKDFNADIQNYNLYSSNTVRTIQSATWFSAGRSLTVDKKMMDCGSGIYASINTLLKKSQNKNVVIFTHNHCLTYIAKNKRGVKFEPDYLDALVMHAANGKLFLDGEFVPG.

An N-terminal signal peptide occupies residues 1 to 35 (MLAFILRFIKNKSYFALLAGAWVIIAGLTSQHAWS).

It belongs to the phosphoglycerate mutase family. Ais subfamily.

It localises to the periplasm. Its pathway is bacterial outer membrane biogenesis; lipopolysaccharide metabolism. Its function is as follows. Catalyzes the dephosphorylation of heptose(II) of the outer membrane lipopolysaccharide core. The sequence is that of Lipopolysaccharide core heptose(II)-phosphate phosphatase from Salmonella arizonae (strain ATCC BAA-731 / CDC346-86 / RSK2980).